The chain runs to 304 residues: Phosphoribosylaminoimidazole-succinocarboxamide synthase (304 aa).

The protein belongs to the SAICAR synthetase family.

It catalyses the reaction 5-amino-1-(5-phospho-D-ribosyl)imidazole-4-carboxylate + L-aspartate + ATP = (2S)-2-[5-amino-1-(5-phospho-beta-D-ribosyl)imidazole-4-carboxamido]succinate + ADP + phosphate + 2 H(+). Its pathway is purine metabolism; IMP biosynthesis via de novo pathway; 5-amino-1-(5-phospho-D-ribosyl)imidazole-4-carboxamide from 5-amino-1-(5-phospho-D-ribosyl)imidazole-4-carboxylate: step 1/2. This chain is Phosphoribosylaminoimidazole-succinocarboxamide synthase, found in Corynebacterium efficiens (strain DSM 44549 / YS-314 / AJ 12310 / JCM 11189 / NBRC 100395).